The chain runs to 197 residues: Inosine triphosphate pyrophosphatase (197 aa).

10–15 (TGNANK) serves as a coordination point for ITP. E45 lines the Mg(2+) pocket. Residues K58, 76–77 (DT), K93, 151–154 (FGWD), K175, and 180–181 (HR) contribute to the ITP site.

Belongs to the HAM1 NTPase family. As to quaternary structure, homodimer. Requires Mg(2+) as cofactor. Mn(2+) is required as a cofactor.

It localises to the cytoplasm. The protein resides in the nucleus. It catalyses the reaction ITP + H2O = IMP + diphosphate + H(+). The enzyme catalyses dITP + H2O = dIMP + diphosphate + H(+). The catalysed reaction is XTP + H2O = XMP + diphosphate + H(+). It carries out the reaction N(6)-hydroxy-dATP + H2O = N(6)-hydroxy-dAMP + diphosphate + H(+). Its function is as follows. Pyrophosphatase that hydrolyzes the non-canonical purine nucleotides inosine triphosphate (ITP), deoxyinosine triphosphate (dITP) as well as 2'-deoxy-N-6-hydroxylaminopurine triphosphate (dHAPTP) and 5-bromodeoxyuridine 5'-triphosphate (BrdUTP) to their respective monophosphate derivatives. Xanthosine 5'-triphosphate (XTP) is also a potential substrate. The enzyme does not distinguish between the deoxy- and ribose forms. Probably excludes non-canonical purines from RNA and DNA precursor pools, thus preventing their incorporation into RNA and DNA and avoiding chromosomal lesions. In Saccharomyces cerevisiae (strain ATCC 204508 / S288c) (Baker's yeast), this protein is Inosine triphosphate pyrophosphatase.